The following is a 306-amino-acid chain: Pyridoxal 5'-phosphate synthase subunit PdxS (306 aa).

D36 serves as a coordination point for D-ribose 5-phosphate. The active-site Schiff-base intermediate with D-ribose 5-phosphate is the K93. G165 is a binding site for D-ribose 5-phosphate. R177 serves as a coordination point for D-glyceraldehyde 3-phosphate. Residues G226 and 247-248 (GS) each bind D-ribose 5-phosphate.

Belongs to the PdxS/SNZ family. In terms of assembly, in the presence of PdxT, forms a dodecamer of heterodimers.

It carries out the reaction aldehydo-D-ribose 5-phosphate + D-glyceraldehyde 3-phosphate + L-glutamine = pyridoxal 5'-phosphate + L-glutamate + phosphate + 3 H2O + H(+). It functions in the pathway cofactor biosynthesis; pyridoxal 5'-phosphate biosynthesis. In terms of biological role, catalyzes the formation of pyridoxal 5'-phosphate from ribose 5-phosphate (RBP), glyceraldehyde 3-phosphate (G3P) and ammonia. The ammonia is provided by the PdxT subunit. Can also use ribulose 5-phosphate and dihydroxyacetone phosphate as substrates, resulting from enzyme-catalyzed isomerization of RBP and G3P, respectively. This Salinispora arenicola (strain CNS-205) protein is Pyridoxal 5'-phosphate synthase subunit PdxS.